The following is a 702-amino-acid chain: MAAAVTIPGPRIGALQSSGLTLLLSLAAHCSGPQAKVLSPGGLDASGANLWASANCSLLQGFWCQPASQLPRDQLSALIQRLALLQVPLQAWQLSCLANLASRCGLQDDFTLHPPNLLLFYNLSQVREADCRAFIRRAAQGDVELLSHLPDQRVALWRAAVACLVGAGLRLSASDQQLLGALVCDMDASSIGAADPHMLENLRRCPRLTAAQRIALNSLLAGGKTSLGPPGSWTLEGLQALGPLATYISPHLWAQVQEAVGLGFFRSVVASCQVGRLGQREARCFVTSFLESKTKPVSSRPRLSTGNITAATLRDDLFLVHYDCAELESCLDGCILRTNLDTLLQHLLPTECQHVVKAKLAQIYPQGLPEDQLRLITSLVYLYSRTEIGQWSITSQDTVMALLASDVALENQTEAVLQKFLEHNGTVSGALLLAIGGTRLCWMSPHQIQTIHPQELRLAGALDLSSCPQSRKDVLYTKAHETFGSSGTLAAYYRLMRPYLGGSPGGAQPPSPVPPGGAPVEELRHLAHANISMDIDTFTSLNPLELQSLDVGNVTALLGHNVGDLQKARSHPTVRAWLRSLNSSTLGQLGLDASPTSPTGPAHGTRGPPSTTHQVLHLVHTSGLPTNDAQASTSGSLWAPLGYLPLAMALPCSLLCLLHWGTCILVSVDSVASGWLGSQGSGAGKTEVLDSAGRPLGLTGQL.

The signal sequence occupies residues 1 to 35 (MAAAVTIPGPRIGALQSSGLTLLLSLAAHCSGPQA). Topologically, residues 36–638 (KVLSPGGLDA…AQASTSGSLW (603 aa)) are extracellular. N-linked (GlcNAc...) asparagine glycosylation is found at Asn-122, Asn-307, and Asn-424. The tract at residues 588–611 (QLGLDASPTSPTGPAHGTRGPPST) is disordered. The helical transmembrane segment at 639–668 (APLGYLPLAMALPCSLLCLLHWGTCILVSV) threads the bilayer. At 669 to 702 (DSVASGWLGSQGSGAGKTEVLDSAGRPLGLTGQL) the chain is on the cytoplasmic side.

It belongs to the mesothelin family.

Its subcellular location is the membrane. In terms of biological role, may play a role in cellular adhesion. The polypeptide is Mesothelin-like protein (MSLNL) (Homo sapiens (Human)).